Consider the following 120-residue polypeptide: Large ribosomal subunit protein bL12 (120 aa).

It belongs to the bacterial ribosomal protein bL12 family. Homodimer. Part of the ribosomal stalk of the 50S ribosomal subunit. Forms a multimeric L10(L12)X complex, where L10 forms an elongated spine to which 2 to 4 L12 dimers bind in a sequential fashion. Binds GTP-bound translation factors.

Its function is as follows. Forms part of the ribosomal stalk which helps the ribosome interact with GTP-bound translation factors. Is thus essential for accurate translation. This is Large ribosomal subunit protein bL12 from Listeria welshimeri serovar 6b (strain ATCC 35897 / DSM 20650 / CCUG 15529 / CIP 8149 / NCTC 11857 / SLCC 5334 / V8).